The primary structure comprises 932 residues: 2-oxoglutarate dehydrogenase E1 component (932 aa).

Belongs to the alpha-ketoglutarate dehydrogenase family. Homodimer. Part of the 2-oxoglutarate dehydrogenase (OGDH) complex composed of E1 (2-oxoglutarate dehydrogenase), E2 (dihydrolipoamide succinyltransferase) and E3 (dihydrolipoamide dehydrogenase); the complex contains multiple copies of the three enzymatic components (E1, E2 and E3). It depends on thiamine diphosphate as a cofactor.

It catalyses the reaction N(6)-[(R)-lipoyl]-L-lysyl-[protein] + 2-oxoglutarate + H(+) = N(6)-[(R)-S(8)-succinyldihydrolipoyl]-L-lysyl-[protein] + CO2. Its function is as follows. E1 component of the 2-oxoglutarate dehydrogenase (OGDH) complex which catalyzes the decarboxylation of 2-oxoglutarate, the first step in the conversion of 2-oxoglutarate to succinyl-CoA and CO(2). This Staphylococcus aureus (strain MRSA252) protein is 2-oxoglutarate dehydrogenase E1 component.